A 514-amino-acid polypeptide reads, in one-letter code: MKPAHAAASWRNPLRDKRDKRLPRIAGPCGMVIFGVTGDLARKKVMPAVYDLANRGLLPPTFSLVGFARRDWSTQDFGQVVYNAVQEHCRTPFRQQNWDRLAEGFRFVPGTFDDDDAFAQLAETLEKLDAERGTGGNHAFYLAIPPKSFPVVCEQLHKSGLARPQGDRWSRVVIEKPFGHDLASARELNKAVNAVFPEEAVFRIDHYLGKETVQNILALRFANQLFDPIWNAHYVDHVQITMAEDIGLGGRAGYYDGIGAARDVIQNHLMQLLALTAMEEPVSFHPAALQAEKIKVLSATRLAEPLDQTTSRGQYAAGWQGGEKVVGLLDEEGFAEDSTTETFAAITLEVDTRRWAGVPFYLRTGKRLGRRVTEIALVFRRAPHLPFDATMTDELGTNAMVIRVQPDEGVTLRFGSKVPGTAMEVRDVNMDFSYGSAFAEDSPEAYERLILDVLLGEPSLFPVNAEVELAWEILDPALEHWAAHGTPDAYEAGTWGPESSLEMLRRTGREWRRP.

NADP(+)-binding residues include R69 and K176. Substrate-binding residues include H206, K210, E244, and D263. H268 serves as the catalytic Proton acceptor. K366 serves as a coordination point for substrate.

Belongs to the glucose-6-phosphate dehydrogenase family.

The catalysed reaction is D-glucose 6-phosphate + NADP(+) = 6-phospho-D-glucono-1,5-lactone + NADPH + H(+). The protein operates within carbohydrate degradation; pentose phosphate pathway; D-ribulose 5-phosphate from D-glucose 6-phosphate (oxidative stage): step 1/3. In terms of biological role, catalyzes the oxidation of glucose 6-phosphate to 6-phosphogluconolactone. This is Glucose-6-phosphate 1-dehydrogenase 2 from Mycobacterium bovis (strain ATCC BAA-935 / AF2122/97).